A 514-amino-acid polypeptide reads, in one-letter code: ATP synthase subunit alpha (514 aa).

170–177 contacts ATP; sequence GDRQIGKT.

This sequence belongs to the ATPase alpha/beta chains family. As to quaternary structure, F-type ATPases have 2 components, CF(1) - the catalytic core - and CF(0) - the membrane proton channel. CF(1) has five subunits: alpha(3), beta(3), gamma(1), delta(1), epsilon(1). CF(0) has three main subunits: a(1), b(2) and c(9-12). The alpha and beta chains form an alternating ring which encloses part of the gamma chain. CF(1) is attached to CF(0) by a central stalk formed by the gamma and epsilon chains, while a peripheral stalk is formed by the delta and b chains.

The protein resides in the cell inner membrane. The enzyme catalyses ATP + H2O + 4 H(+)(in) = ADP + phosphate + 5 H(+)(out). Its function is as follows. Produces ATP from ADP in the presence of a proton gradient across the membrane. The alpha chain is a regulatory subunit. In Pseudomonas fluorescens (strain SBW25), this protein is ATP synthase subunit alpha.